Here is a 246-residue protein sequence, read N- to C-terminus: Putative outer membrane protein YiaT (246 aa).

An N-terminal signal peptide occupies residues 1-21 (MLINRNIVALFALPFMASATA).

Belongs to the MipA/OmpV family.

It localises to the cell outer membrane. The protein is Putative outer membrane protein YiaT (yiaT) of Escherichia coli O157:H7.